The primary structure comprises 127 residues: Promotilin (127 aa).

The signal sequence occupies residues 1–25 (MLSRKAVAALLLVHVTAMLASQTEG). The disordered stretch occupies residues 41–67 (REQNKRLRKSLRVQQRSKAAGRLEPQE).

It belongs to the motilin family. As to expression, present in the gut mucosa with the exception of the gastric corpus. Also present in medulla oblongata, nucleus of the solitary tract, hypophysis, spinal cord, hypothalamus, and cerebellum but not in the cerebral cortex.

It localises to the secreted. Functionally, plays an important role in the regulation of interdigestive gastrointestinal motility and indirectly causes rhythmic contraction of duodenal and colonic smooth muscle. The chain is Promotilin (MLN) from Cavia porcellus (Guinea pig).